A 988-amino-acid polypeptide reads, in one-letter code: Next to BRCA1 gene 1 protein (988 aa).

The PB1 domain maps to 4 to 86 (QVTLNVTFKN…NQLQMQVHEG (83 aa)). Phosphoserine is present on S117. The disordered stretch occupies residues 126-150 (MKTTEEPAPEQCSSAPCDTDQPQDK). The ZZ-type zinc-finger motif lies at 213 to 265 (SWHIACSHCQKRIVGVRYQCSLCPSYNICEDCEAGPYTHDTNHVLLKLRRPVV). Residues C218, C221, C232, C235, C241, C244, H251, and H255 each contribute to the Zn(2+) site. 2 ATG8 family proteins-binding regions span residues 543–637 (ASER…PASV) and 745–756 (ASSEDYIIILPE). Residue T587 is modified to Phosphothreonine. Residues S591, S597, and S626 each carry the phosphoserine modification. The segment at 611-644 (ESEGAGFKAPPDSTVSAKRKAETPASVEETEEDL) is disordered. Disordered regions lie at residues 768 to 822 (MYSS…TSQP) and 841 to 900 (RSAP…HHNG). The span at 795–807 (TEARERLPERESQ) shows a compositional bias: basic and acidic residues. Positions 808–822 (PQEQSISDILTTSQP) are enriched in polar residues. S860 carries the phosphoserine modification. Positions 935-979 (SEDQTTALMAHLFEMGFCDRQLNLRLLRKHNYNILQVVTELLQVN) constitute a UBA domain.

In terms of assembly, homooligomer and heterooligomer. Interacts with TRIM55. Interacts with titin/TTN. Interacts with RNF29, USP8, MAP1LC3A, MAP1LC3B, MAP1LC3C, GABARAP, GABARAPL1 and GABARAPL2. Binds to ubiquitin and ubiquitinated proteins. Interacts with SQSTM1. Interacts with TAX1BP1. Interacts with IRF3; this interaction mediates autophagic degradation of IRF3. Interacts with IL12A and IL12B. In terms of processing, phosphorylated by GSK3A; this phosphorylation inhibits NBR1 involvement in the formation of ubiquitinated protein aggregates. In terms of tissue distribution, expressed in brain.

The protein resides in the cytoplasm. The protein localises to the cytoplasmic vesicle. Its subcellular location is the autophagosome. It is found in the lysosome. It localises to the myofibril. The protein resides in the sarcomere. The protein localises to the m line. Functionally, ubiquitin-binding autophagy adapter that participates in different processes including host defense or intracellular homeostasis. Possesses a double function during the selective autophagy by acting as a shuttle bringing ubiquitinated proteins to autophagosomes and also by participating in the formation of protein aggregates. Plays a role in the regulation of the innate immune response by modulating type I interferon production and targeting ubiquitinated IRF3 for autophagic degradation. In response to oxidative stress, promotes an increase in SQSTM1 levels, phosphorylation, and body formation by preventing its autophagic degradation. In turn, activates the KEAP1-NRF2/NFE2L2 antioxidant pathway. Also plays non-autophagy role by mediating the shuttle of IL-12 to late endosome for subsequent secretion. This Mus musculus (Mouse) protein is Next to BRCA1 gene 1 protein (Nbr1).